Reading from the N-terminus, the 88-residue chain is Class I hydrophobin F (88 aa).

A signal peptide spans 1–21; the sequence is MLSRLFTVPAILLATLGSAAT. Intrachain disulfides connect C30-C67, C34-C58, C35-C51, and C68-C84.

It belongs to the fungal hydrophobin family.

The protein resides in the secreted. Its subcellular location is the cell wall. The protein localises to the vacuole. It is found in the cytoplasmic vesicle. Functionally, aerial growth, conidiation, and dispersal of filamentous fungi in the environment rely upon a capability of their secreting small amphipathic proteins called hydrophobins (HPBs) with low sequence identity. Class I can self-assemble into an outermost layer of rodlet bundles on aerial cell surfaces, conferring cellular hydrophobicity that supports fungal growth, development and dispersal; whereas Class II form highly ordered films at water-air interfaces through intermolecular interactions but contribute nothing to the rodlet structure. Hyd1F contributes to certain cell wall-related features, such as hydrophobicity but is not involved in cell wall-related events during fungal proliferation in host hemocoel. Does not contribute to conidial hydrophobicity. In Beauveria bassiana (strain ARSEF 2860) (White muscardine disease fungus), this protein is Class I hydrophobin F.